A 180-amino-acid polypeptide reads, in one-letter code: Interleukin-17B (180 aa).

The first 20 residues, 1–20, serve as a signal peptide directing secretion; that stretch reads MDWPHNLLFLLTISIFLGLG. Residues 22-44 form a disordered region; the sequence is PRSPKSKRKGQGRPGPLAPGPHQ. A glycan (N-linked (GlcNAc...) asparagine) is linked at Asn-75. 2 cysteine pairs are disulfide-bonded: Cys-121-Cys-176 and Cys-126-Cys-178.

It belongs to the IL-17 family. Expressed in adult pancreas, small intestine, stomach, spinal cord and testis. Less pronounced expression in prostate, colon mucosal lining, and ovary.

It is found in the secreted. Stimulates the release of tumor necrosis factor alpha and IL-1-beta from the monocytic cell line THP-1. The protein is Interleukin-17B (IL17B) of Homo sapiens (Human).